Here is a 177-residue protein sequence, read N- to C-terminus: MSRIGKMPVAVPAGVDVLVKDDQISVKGAGGSLFLTQNALVKVSSDAGALSFQPANDSREANAMSGTMRQLVNNMVVGVTKGFEKKLNLVGVGYKAQAQGAKLNLTVGYSHPVNKDMPAGITVATPTPTEIVIKGADRQRVGQVAAEIRAIRPPEPYKGKGIRYSDEKITIKETKKK.

The protein belongs to the universal ribosomal protein uL6 family. As to quaternary structure, part of the 50S ribosomal subunit.

Its function is as follows. This protein binds to the 23S rRNA, and is important in its secondary structure. It is located near the subunit interface in the base of the L7/L12 stalk, and near the tRNA binding site of the peptidyltransferase center. The sequence is that of Large ribosomal subunit protein uL6 from Albidiferax ferrireducens (strain ATCC BAA-621 / DSM 15236 / T118) (Rhodoferax ferrireducens).